A 195-amino-acid polypeptide reads, in one-letter code: Calcineurin B homologous protein 1 (195 aa).

Glycine 2 carries the N-myristoyl glycine lipid modification. A Necessary for association with microtubule and interaction with GAPDH motif is present at residues 2–6; the sequence is GSRAS. EF-hand domains are found at residues 26-61, 66-101, 110-145, and 151-186; these read SQIT…AINP, IINA…KSKD, SRSN…MVGV, and QLGS…VDVE. Ca(2+) contacts are provided by aspartate 123, aspartate 125, aspartate 127, lysine 129, and glutamate 134. The Nuclear export signal 1 motif lies at 138–147; the sequence is VLRMMVGVNI. Aspartate 164, aspartate 166, aspartate 168, and glutamate 175 together coordinate Ca(2+). The Nuclear export signal 2 motif lies at 176 to 185; that stretch reads FVKVLEKVDV.

Belongs to the calcineurin regulatory subunit family. CHP subfamily. Monomer. Interacts with STK17B; the interaction occurs in a calcium-independent manner and induces the translocation of CHP1 from the Golgi to the nucleus. Interacts with GAPDH; the interaction is direct, occurs in a N-myristoylation-dependent manner and facilitates the ability of CHP1 to bind microtubules. Interacts with KIF1B (via the C-terminal end of the kinesin-motor domain); the interaction occurs in a calcium-dependent manner. Associates (via C-terminal domain) with microtubules; the association occurs with polymerized microtubules during the cell cycle in a myristoylation- and calcium-independent manner and is enhanced by GAPDH. Interacts with PPP3CA. Interacts with SLC9A1/NHE1 (via the cytoplasmic C-terminal domain); the interaction occurs at the plasma membrane in a calcium-dependent manner and at a domain that is critical for growth factor stimulation of the exchanger. Interacts with SLC9A3; increases SLC9A3 trafficking and activity at the plasma membrane. Phosphorylated; decreased phosphorylation is associated with an increase in SLC9A1/NHE1 Na(+)/H(+) exchange activity. Phosphorylation occurs in serum-dependent manner. The phosphorylation state may regulate the binding to SLC9A1/NHE1. Post-translationally, both N-myristoylation and calcium-mediated conformational changes are essential for its function in exocytic traffic. N-myristoylation is required for its association with microtubules and interaction with GAPDH, but not for the constitutive association to membranes.

The protein resides in the nucleus. It is found in the cytoplasm. It localises to the cytoskeleton. Its subcellular location is the endomembrane system. The protein localises to the endoplasmic reticulum-Golgi intermediate compartment. The protein resides in the endoplasmic reticulum. It is found in the cell membrane. It localises to the membrane. In terms of biological role, calcium-binding protein involved in different processes such as regulation of vesicular trafficking, plasma membrane Na(+)/H(+) exchanger and gene transcription. Involved in the constitutive exocytic membrane traffic. Mediates the association between microtubules and membrane-bound organelles of the endoplasmic reticulum and Golgi apparatus and is also required for the targeting and fusion of transcytotic vesicles (TCV) with the plasma membrane. Functions as an integral cofactor in cell pH regulation by controlling plasma membrane-type Na(+)/H(+) exchange activity. Affects the pH sensitivity of SLC9A1/NHE1 by increasing its sensitivity at acidic pH. Required for the stabilization and localization of SLC9A1/NHE1 at the plasma membrane. Inhibits serum- and GTPase-stimulated Na(+)/H(+) exchange. Plays a role as an inhibitor of ribosomal RNA transcription by repressing the nucleolar UBF1 transcriptional activity. May sequester UBF1 in the nucleoplasm and limit its translocation to the nucleolus. Associates to the ribosomal gene promoter. Acts as a negative regulator of the calcineurin/NFAT signaling pathway. Inhibits NFAT nuclear translocation and transcriptional activity by suppressing the calcium-dependent calcineurin phosphatase activity. Also negatively regulates the kinase activity of the apoptosis-induced kinase STK17B. Inhibits both STK17B auto- and substrate-phosphorylations in a calcium-dependent manner. This Bos taurus (Bovine) protein is Calcineurin B homologous protein 1 (CHP1).